Here is a 216-residue protein sequence, read N- to C-terminus: Ribosomal RNA large subunit methyltransferase E (216 aa).

Residues Gly-60, Trp-62, Asp-80, Asp-96, and Asp-121 each contribute to the S-adenosyl-L-methionine site. Catalysis depends on Lys-161, which acts as the Proton acceptor.

The protein belongs to the class I-like SAM-binding methyltransferase superfamily. RNA methyltransferase RlmE family.

It localises to the cytoplasm. It carries out the reaction uridine(2552) in 23S rRNA + S-adenosyl-L-methionine = 2'-O-methyluridine(2552) in 23S rRNA + S-adenosyl-L-homocysteine + H(+). Specifically methylates the uridine in position 2552 of 23S rRNA at the 2'-O position of the ribose in the fully assembled 50S ribosomal subunit. The chain is Ribosomal RNA large subunit methyltransferase E from Pseudomonas syringae pv. syringae (strain B728a).